The following is a 300-amino-acid chain: Ribonuclease HIII (300 aa).

The 215-residue stretch at 86 to 300 folds into the RNase H type-2 domain; sequence RPRLGVDESG…FNEICDSASA (215 aa). Positions 92, 93, and 196 each coordinate a divalent metal cation.

The protein belongs to the RNase HII family. RnhC subfamily. It depends on Mn(2+) as a cofactor. Requires Mg(2+) as cofactor.

It localises to the cytoplasm. The enzyme catalyses Endonucleolytic cleavage to 5'-phosphomonoester.. Endonuclease that specifically degrades the RNA of RNA-DNA hybrids. This is Ribonuclease HIII from Chlamydia felis (strain Fe/C-56) (Chlamydophila felis).